The primary structure comprises 1866 residues: Nucleoporin Nup188 (1866 aa).

Belongs to the Nup188 family. Part of the nuclear pore complex (NPC).

It is found in the nucleus. The protein resides in the nuclear pore complex. In terms of biological role, component of the nuclear pore complex (NPC), a complex required for the trafficking across the nuclear envelope. Required for proper protein transport into the nucleus. The chain is Nucleoporin Nup188 from Drosophila melanogaster (Fruit fly).